The sequence spans 268 residues: Glucosamine-6-phosphate deaminase (268 aa).

The active-site Proton acceptor; for enolization step is the Asp72. Asp141 functions as the For ring-opening step in the catalytic mechanism. Catalysis depends on His143, which acts as the Proton acceptor; for ring-opening step. The For ring-opening step role is filled by Glu148.

This sequence belongs to the glucosamine/galactosamine-6-phosphate isomerase family. NagB subfamily.

The catalysed reaction is alpha-D-glucosamine 6-phosphate + H2O = beta-D-fructose 6-phosphate + NH4(+). The protein operates within amino-sugar metabolism; N-acetylneuraminate degradation; D-fructose 6-phosphate from N-acetylneuraminate: step 5/5. With respect to regulation, allosterically activated by N-acetylglucosamine 6-phosphate (GlcNAc6P). In terms of biological role, catalyzes the reversible isomerization-deamination of glucosamine 6-phosphate (GlcN6P) to form fructose 6-phosphate (Fru6P) and ammonium ion. This chain is Glucosamine-6-phosphate deaminase, found in Borreliella afzelii (strain PKo) (Borrelia afzelii).